Here is a 406-residue protein sequence, read N- to C-terminus: Tryptophan synthase beta chain (406 aa).

Lys-99 carries the post-translational modification N6-(pyridoxal phosphate)lysine.

This sequence belongs to the TrpB family. As to quaternary structure, tetramer of two alpha and two beta chains. Requires pyridoxal 5'-phosphate as cofactor.

It carries out the reaction (1S,2R)-1-C-(indol-3-yl)glycerol 3-phosphate + L-serine = D-glyceraldehyde 3-phosphate + L-tryptophan + H2O. It participates in amino-acid biosynthesis; L-tryptophan biosynthesis; L-tryptophan from chorismate: step 5/5. In terms of biological role, the beta subunit is responsible for the synthesis of L-tryptophan from indole and L-serine. The protein is Tryptophan synthase beta chain of Brucella melitensis biotype 2 (strain ATCC 23457).